The following is a 375-amino-acid chain: Trichodiene synthase (375 aa).

It belongs to the trichodiene synthase family.

It catalyses the reaction (2E,6E)-farnesyl diphosphate = trichodiene + diphosphate. Its pathway is sesquiterpene biosynthesis; trichothecene biosynthesis. Its function is as follows. TS is a member of the terpene cyclase group of enzymes. It catalyzes the isomerization and cyclization of farnesyl pyro-phosphate to form trichodiene, the first cyclic intermediate in the biosynthetic pathway for trichothecenes. It serves to branch trichothecene biosynthesis from the isoprenoid pathway. This Fusarium culmorum protein is Trichodiene synthase (TRI5).